We begin with the raw amino-acid sequence, 101 residues long: ATP synthase subunit c (101 aa).

The next 2 membrane-spanning stretches (helical) occupy residues Ala-31–Gln-51 and Ala-81–Gly-101.

Belongs to the ATPase C chain family. As to quaternary structure, F-type ATPases have 2 components, F(1) - the catalytic core - and F(0) - the membrane proton channel. F(1) has five subunits: alpha(3), beta(3), gamma(1), delta(1), epsilon(1). F(0) has three main subunits: a(1), b(2) and c(10-14). The alpha and beta chains form an alternating ring which encloses part of the gamma chain. F(1) is attached to F(0) by a central stalk formed by the gamma and epsilon chains, while a peripheral stalk is formed by the delta and b chains.

It localises to the cell membrane. Functionally, f(1)F(0) ATP synthase produces ATP from ADP in the presence of a proton or sodium gradient. F-type ATPases consist of two structural domains, F(1) containing the extramembraneous catalytic core and F(0) containing the membrane proton channel, linked together by a central stalk and a peripheral stalk. During catalysis, ATP synthesis in the catalytic domain of F(1) is coupled via a rotary mechanism of the central stalk subunits to proton translocation. Key component of the F(0) channel; it plays a direct role in translocation across the membrane. A homomeric c-ring of between 10-14 subunits forms the central stalk rotor element with the F(1) delta and epsilon subunits. This Mesomycoplasma hyopneumoniae (strain 7448) (Mycoplasma hyopneumoniae) protein is ATP synthase subunit c.